The chain runs to 1550 residues: Gag-Pol polyprotein (1550 aa).

Gly-2 is lipidated: N-myristoyl glycine; by host. Residues 7 to 31 are interaction with Gp41; the sequence is VLRGKKADELEKVRLRPGGKKKYRL. Residues 16–22 carry the Nuclear export signal motif; sequence LEKVRLR. Positions 26–32 match the Nuclear localization signal motif; it reads KKKYRLK. The tract at residues 110–136 is disordered; it reads AETGTAEKMPNTSRPTAPPSGKRGNYP. A Phosphotyrosine; by host modification is found at Tyr-135. Residues 191–228 form an interaction with human PPIA/CYPA and NUP153 region; the sequence is NCVGDHQAAMQIIREIINEEAADWDSQHPIPGPLPAGQ. Residues 279 to 365 form a dimerization/Multimerization of capsid protein p24 region; the sequence is YNPTNILDIK…GGPGQKARLM (87 aa). 2 consecutive CCHC-type zinc fingers follow at residues 389–406 and 410–427; these read IRYW…QCRA and QGCW…NCPE. The segment at 437–508 is disordered; it reads PTGKEASQLP…ERDTSQRGDR (72 aa). A compositionally biased stretch (low complexity) spans 456–469; sequence TNSTSGRSSSGTVG. A compositionally biased stretch (basic and acidic residues) spans 497 to 508; it reads RAERDTSQRGDR. Residues 513 to 517 are dimerization of protease; sequence PQFSL. Residues 532 to 601 enclose the Peptidase A2 domain; that stretch reads VEVLLDTGAD…TPINIFGRNI (70 aa). Residue Asp-537 is the For protease activity; shared with dimeric partner of the active site. 2 dimerization of protease regions span residues 561-567 and 600-612; these read GIGGFIN and NILT…LNLP. A Reverse transcriptase domain is found at 655 to 845; it reads EGQLEEAPPT…PPFQWMGCEL (191 aa). Residues Asp-721, Asp-796, and Asp-797 each contribute to the Mg(2+) site. The interval 838–846 is RT 'primer grip'; the sequence is FQWMGCELW. Positions 1008 to 1024 match the Tryptophan repeat motif motif; that stretch reads WEQWWDNYWQVTWIPEW. The RNase H type-1 domain maps to 1044–1167; it reads IPGAETFYTD…VDHLVSQGIR (124 aa). Mg(2+) contacts are provided by Asp-1053, Glu-1088, Asp-1108, and Asp-1159. An Integrase-type zinc finger spans residues 1173–1214; that stretch reads EKIEPAQEEHEKYHSIIKELTHKFGIPLLVARQIVNSCAQCQ. Residues His-1182, His-1186, Cys-1210, and Cys-1213 each coordinate Zn(2+). Residues 1223 to 1374 enclose the Integrase catalytic domain; the sequence is QVNAEIGVWQ…TPAERLINMI (152 aa). Mg(2+)-binding residues include Asp-1234, Asp-1286, and Glu-1322. Positions 1393–1440 form a DNA-binding region, integrase-type; it reads FQVYYREGRDQLWKGPGELLWKGEGAVIVKVGTDIKVVPRRKAKIIRD.

As to quaternary structure, homotrimer; further assembles as hexamers of trimers. Interacts with gp41 (via C-terminus). Interacts with host CALM1; this interaction induces a conformational change in the Matrix protein, triggering exposure of the myristate group. Interacts with host AP3D1; this interaction allows the polyprotein trafficking to multivesicular bodies during virus assembly. Part of the pre-integration complex (PIC) which is composed of viral genome, matrix protein, Vpr and integrase. Homodimer; the homodimer further multimerizes as homohexamers or homopentamers. Interacts with human PPIA/CYPA. Interacts with human NUP153. Interacts with host PDZD8; this interaction stabilizes the capsid. Interacts with monkey TRIM5; this interaction destabilizes the capsid. In terms of assembly, homodimer, whose active site consists of two apposed aspartic acid residues. As to quaternary structure, heterodimer of p66 RT and p51 RT (RT p66/p51). Heterodimerization of RT is essential for DNA polymerase activity. The overall folding of the subdomains is similar in p66 RT and p51 RT but the spatial arrangements of the subdomains are dramatically different. Homotetramer; may further associate as a homohexadecamer. Part of the pre-integration complex (PIC) which is composed of viral genome, matrix protein, Vpr and integrase. Interacts with human SMARCB1/INI1 and human PSIP1/LEDGF isoform 1. Interacts with human KPNA3; this interaction might play a role in nuclear import of the pre-integration complex. Interacts with human NUP153; this interaction might play a role in nuclear import of the pre-integration complex. The cofactor is Mg(2+). In terms of processing, specific enzymatic cleavages by the viral protease yield mature proteins. The protease is released by autocatalytic cleavage. The polyprotein is cleaved during and after budding, this process is termed maturation. Proteolytic cleavage of p66 RT removes the RNase H domain to yield the p51 RT subunit. Nucleocapsid protein p7 might be further cleaved after virus entry.

It is found in the host cell membrane. Its subcellular location is the host endosome. It localises to the host multivesicular body. The protein localises to the virion membrane. The protein resides in the host nucleus. It is found in the host cytoplasm. Its subcellular location is the virion. It carries out the reaction Endopeptidase for which the P1 residue is preferably hydrophobic.. The enzyme catalyses Endohydrolysis of RNA in RNA/DNA hybrids. Three different cleavage modes: 1. sequence-specific internal cleavage of RNA. Human immunodeficiency virus type 1 and Moloney murine leukemia virus enzymes prefer to cleave the RNA strand one nucleotide away from the RNA-DNA junction. 2. RNA 5'-end directed cleavage 13-19 nucleotides from the RNA end. 3. DNA 3'-end directed cleavage 15-20 nucleotides away from the primer terminus.. It catalyses the reaction 3'-end directed exonucleolytic cleavage of viral RNA-DNA hybrid.. The catalysed reaction is DNA(n) + a 2'-deoxyribonucleoside 5'-triphosphate = DNA(n+1) + diphosphate. Its activity is regulated as follows. Protease: The viral protease is inhibited by many synthetic protease inhibitors (PIs), such as amprenavir, atazanavir, indinavir, loprinavir, nelfinavir, ritonavir and saquinavir. Use of protease inhibitors in tritherapy regimens permit more ambitious therapeutic strategies. Reverse transcriptase/ribonuclease H: RT can be inhibited either by nucleoside RT inhibitors (NRTIs) or by non nucleoside RT inhibitors (NNRTIs). NRTIs act as chain terminators, whereas NNRTIs inhibit DNA polymerization by binding a small hydrophobic pocket near the RT active site and inducing an allosteric change in this region. Classical NRTIs are abacavir, adefovir (PMEA), didanosine (ddI), lamivudine (3TC), stavudine (d4T), tenofovir (PMPA), zalcitabine (ddC), and zidovudine (AZT). Classical NNRTIs are atevirdine (BHAP U-87201E), delavirdine, efavirenz (DMP-266), emivirine (I-EBU), and nevirapine (BI-RG-587). The tritherapies used as a basic effective treatment of AIDS associate two NRTIs and one NNRTI. Mediates, with Gag polyprotein, the essential events in virion assembly, including binding the plasma membrane, making the protein-protein interactions necessary to create spherical particles, recruiting the viral Env proteins, and packaging the genomic RNA via direct interactions with the RNA packaging sequence (Psi). Gag-Pol polyprotein may regulate its own translation, by the binding genomic RNA in the 5'-UTR. At low concentration, the polyprotein would promote translation, whereas at high concentration, the polyprotein would encapsidate genomic RNA and then shut off translation. Its function is as follows. Targets the polyprotein to the plasma membrane via a multipartite membrane-binding signal, that includes its myristoylated N-terminus. Matrix protein is part of the pre-integration complex. Implicated in the release from host cell mediated by Vpu. Binds to RNA. Functionally, forms the conical core that encapsulates the genomic RNA-nucleocapsid complex in the virion. Most core are conical, with only 7% tubular. The core is constituted by capsid protein hexamer subunits. The core is disassembled soon after virion entry. Host restriction factors such as TRIM5-alpha or TRIMCyp bind retroviral capsids and cause premature capsid disassembly, leading to blocks in reverse transcription. Capsid restriction by TRIM5 is one of the factors which restricts HIV-1 to the human species. Host PIN1 apparently facilitates the virion uncoating. On the other hand, interactions with PDZD8 or CYPA stabilize the capsid. In terms of biological role, encapsulates and protects viral dimeric unspliced genomic RNA (gRNA). Binds these RNAs through its zinc fingers. Acts as a nucleic acid chaperone which is involved in rearangement of nucleic acid secondary structure during gRNA retrotranscription. Also facilitates template switch leading to recombination. As part of the polyprotein, participates in gRNA dimerization, packaging, tRNA incorporation and virion assembly. Aspartyl protease that mediates proteolytic cleavages of Gag and Gag-Pol polyproteins during or shortly after the release of the virion from the plasma membrane. Cleavages take place as an ordered, step-wise cascade to yield mature proteins. This process is called maturation. Displays maximal activity during the budding process just prior to particle release from the cell. Also cleaves Nef and Vif, probably concomitantly with viral structural proteins on maturation of virus particles. Hydrolyzes host EIF4GI and PABP1 in order to shut off the capped cellular mRNA translation. The resulting inhibition of cellular protein synthesis serves to ensure maximal viral gene expression and to evade host immune response. Its function is as follows. Multifunctional enzyme that converts the viral RNA genome into dsDNA in the cytoplasm, shortly after virus entry into the cell. This enzyme displays a DNA polymerase activity that can copy either DNA or RNA templates, and a ribonuclease H (RNase H) activity that cleaves the RNA strand of RNA-DNA heteroduplexes in a partially processive 3' to 5' endonucleasic mode. Conversion of viral genomic RNA into dsDNA requires many steps. A tRNA(3)-Lys binds to the primer-binding site (PBS) situated at the 5'-end of the viral RNA. RT uses the 3' end of the tRNA primer to perform a short round of RNA-dependent minus-strand DNA synthesis. The reading proceeds through the U5 region and ends after the repeated (R) region which is present at both ends of viral RNA. The portion of the RNA-DNA heteroduplex is digested by the RNase H, resulting in a ssDNA product attached to the tRNA primer. This ssDNA/tRNA hybridizes with the identical R region situated at the 3' end of viral RNA. This template exchange, known as minus-strand DNA strong stop transfer, can be either intra- or intermolecular. RT uses the 3' end of this newly synthesized short ssDNA to perform the RNA-dependent minus-strand DNA synthesis of the whole template. RNase H digests the RNA template except for two polypurine tracts (PPTs) situated at the 5'-end and near the center of the genome. It is not clear if both polymerase and RNase H activities are simultaneous. RNase H probably can proceed both in a polymerase-dependent (RNA cut into small fragments by the same RT performing DNA synthesis) and a polymerase-independent mode (cleavage of remaining RNA fragments by free RTs). Secondly, RT performs DNA-directed plus-strand DNA synthesis using the PPTs that have not been removed by RNase H as primers. PPTs and tRNA primers are then removed by RNase H. The 3' and 5' ssDNA PBS regions hybridize to form a circular dsDNA intermediate. Strand displacement synthesis by RT to the PBS and PPT ends produces a blunt ended, linear dsDNA copy of the viral genome that includes long terminal repeats (LTRs) at both ends. Functionally, catalyzes viral DNA integration into the host chromosome, by performing a series of DNA cutting and joining reactions. This enzyme activity takes place after virion entry into a cell and reverse transcription of the RNA genome in dsDNA. The first step in the integration process is 3' processing. This step requires a complex comprising the viral genome, matrix protein, Vpr and integrase. This complex is called the pre-integration complex (PIC). The integrase protein removes 2 nucleotides from each 3' end of the viral DNA, leaving recessed CA OH's at the 3' ends. In the second step, the PIC enters cell nucleus. This process is mediated through integrase and Vpr proteins, and allows the virus to infect a non dividing cell. This ability to enter the nucleus is specific of lentiviruses, other retroviruses cannot and rely on cell division to access cell chromosomes. In the third step, termed strand transfer, the integrase protein joins the previously processed 3' ends to the 5' ends of strands of target cellular DNA at the site of integration. The 5'-ends are produced by integrase-catalyzed staggered cuts, 5 bp apart. A Y-shaped, gapped, recombination intermediate results, with the 5'-ends of the viral DNA strands and the 3' ends of target DNA strands remaining unjoined, flanking a gap of 5 bp. The last step is viral DNA integration into host chromosome. This involves host DNA repair synthesis in which the 5 bp gaps between the unjoined strands are filled in and then ligated. Since this process occurs at both cuts flanking the HIV genome, a 5 bp duplication of host DNA is produced at the ends of HIV-1 integration. Alternatively, Integrase may catalyze the excision of viral DNA just after strand transfer, this is termed disintegration. This is Gag-Pol polyprotein (gag-pol) from Homo sapiens (Human).